The following is a 78-amino-acid chain: Ubiquitin-like protein 1 (78 aa).

This sequence belongs to the ubiquitin family.

The protein is Ubiquitin-like protein 1 (ubl1) of Schizosaccharomyces pombe (strain 972 / ATCC 24843) (Fission yeast).